Reading from the N-terminus, the 102-residue chain is Small ribosomal subunit protein uS10 (102 aa).

Belongs to the universal ribosomal protein uS10 family. As to quaternary structure, part of the 30S ribosomal subunit.

Involved in the binding of tRNA to the ribosomes. The polypeptide is Small ribosomal subunit protein uS10 (Bacillus thuringiensis (strain Al Hakam)).